Reading from the N-terminus, the 694-residue chain is Elongation factor G (694 aa).

The region spanning 9–288 is the tr-type G domain; it reads SKIRNIGIMA…VIVKWLPSPK (280 aa). Residues 18–25, 82–86, and 136–139 contribute to the GTP site; these read AHIDAGKT, DTPGH, and NKMD.

Belongs to the TRAFAC class translation factor GTPase superfamily. Classic translation factor GTPase family. EF-G/EF-2 subfamily.

It is found in the cytoplasm. Catalyzes the GTP-dependent ribosomal translocation step during translation elongation. During this step, the ribosome changes from the pre-translocational (PRE) to the post-translocational (POST) state as the newly formed A-site-bound peptidyl-tRNA and P-site-bound deacylated tRNA move to the P and E sites, respectively. Catalyzes the coordinated movement of the two tRNA molecules, the mRNA and conformational changes in the ribosome. This chain is Elongation factor G, found in Chlamydia abortus (strain DSM 27085 / S26/3) (Chlamydophila abortus).